Consider the following 493-residue polypeptide: Glycerol kinase (493 aa).

Thr11 contacts ADP. 3 residues coordinate ATP: Thr11, Thr12, and Ser13. Thr11 serves as a coordination point for sn-glycerol 3-phosphate. Arg15 is a binding site for ADP. The sn-glycerol 3-phosphate site is built by Arg80, Glu81, Tyr132, and Asp241. Residues Arg80, Glu81, Tyr132, Asp241, and Gln242 each contribute to the glycerol site. ADP contacts are provided by Thr263 and Gly306. Positions 263, 306, 310, and 408 each coordinate ATP. Residue Gly408 coordinates ADP.

It belongs to the FGGY kinase family.

The enzyme catalyses glycerol + ATP = sn-glycerol 3-phosphate + ADP + H(+). It functions in the pathway polyol metabolism; glycerol degradation via glycerol kinase pathway; sn-glycerol 3-phosphate from glycerol: step 1/1. Its activity is regulated as follows. Inhibited by fructose 1,6-bisphosphate (FBP). Functionally, key enzyme in the regulation of glycerol uptake and metabolism. Catalyzes the phosphorylation of glycerol to yield sn-glycerol 3-phosphate. The polypeptide is Glycerol kinase (Cereibacter sphaeroides (strain ATCC 17029 / ATH 2.4.9) (Rhodobacter sphaeroides)).